The primary structure comprises 162 residues: NADH-quinone oxidoreductase subunit I 2 (162 aa).

4Fe-4S ferredoxin-type domains are found at residues L53 to E83 and T93 to I122. 8 residues coordinate [4Fe-4S] cluster: C63, C66, C69, C73, C102, C105, C108, and C112.

Belongs to the complex I 23 kDa subunit family. NDH-1 is composed of 14 different subunits. Subunits NuoA, H, J, K, L, M, N constitute the membrane sector of the complex. [4Fe-4S] cluster serves as cofactor.

The protein resides in the cell inner membrane. The catalysed reaction is a quinone + NADH + 5 H(+)(in) = a quinol + NAD(+) + 4 H(+)(out). Its function is as follows. NDH-1 shuttles electrons from NADH, via FMN and iron-sulfur (Fe-S) centers, to quinones in the respiratory chain. The immediate electron acceptor for the enzyme in this species is believed to be ubiquinone. Couples the redox reaction to proton translocation (for every two electrons transferred, four hydrogen ions are translocated across the cytoplasmic membrane), and thus conserves the redox energy in a proton gradient. The chain is NADH-quinone oxidoreductase subunit I 2 from Nitrosospira multiformis (strain ATCC 25196 / NCIMB 11849 / C 71).